We begin with the raw amino-acid sequence, 502 residues long: Probable cytosol aminopeptidase (502 aa).

Mn(2+) is bound by residues K269 and D274. The active site involves K281. Mn(2+)-binding residues include D292, D351, and E353. The active site involves R355.

The protein belongs to the peptidase M17 family. It depends on Mn(2+) as a cofactor.

The protein localises to the cytoplasm. The catalysed reaction is Release of an N-terminal amino acid, Xaa-|-Yaa-, in which Xaa is preferably Leu, but may be other amino acids including Pro although not Arg or Lys, and Yaa may be Pro. Amino acid amides and methyl esters are also readily hydrolyzed, but rates on arylamides are exceedingly low.. The enzyme catalyses Release of an N-terminal amino acid, preferentially leucine, but not glutamic or aspartic acids.. Functionally, presumably involved in the processing and regular turnover of intracellular proteins. Catalyzes the removal of unsubstituted N-terminal amino acids from various peptides. This is Probable cytosol aminopeptidase from Vibrio vulnificus (strain CMCP6).